The sequence spans 529 residues: Corneodesmosin (529 aa).

The N-terminal stretch at 1–32 (MGSSRAPWMGRVGGHGMMALLLAGLLLPGTLA) is a signal peptide. 2 disordered regions span residues 38 to 248 (FSDP…SVSG) and 383 to 492 (GSTG…SSAG). Composition is skewed to low complexity over residues 58–83 (GKGD…SARS), 90–100 (GSSSGSSIAQG), 111–175 (GYSQ…NGSA), 189–231 (PSQP…SGGP), 392–408 (SPSS…SSSS), and 426–441 (PGTG…QSSG). N-linked (GlcNAc...) asparagine glycosylation occurs at Asn-172. Residues 449–467 (GSKSSSSGHPCMSVSSLTL) show a composition bias toward polar residues.

Exclusively expressed in skin.

It localises to the secreted. Its function is as follows. Important for the epidermal barrier integrity. The chain is Corneodesmosin (CDSN) from Homo sapiens (Human).